Reading from the N-terminus, the 81-residue chain is Large ribosomal subunit protein bL31B (81 aa).

This sequence belongs to the bacterial ribosomal protein bL31 family. Type B subfamily. As to quaternary structure, part of the 50S ribosomal subunit.

The chain is Large ribosomal subunit protein bL31B from Borreliella burgdorferi (strain ATCC 35210 / DSM 4680 / CIP 102532 / B31) (Borrelia burgdorferi).